Here is a 309-residue protein sequence, read N- to C-terminus: DnaJ homolog subfamily B member 7 (309 aa).

In terms of domain architecture, J spans 3 to 69 (DYYEVLGLQR…EKRDIYDKYG (67 aa)). A disordered region spans residues 282 to 309 (FSAGVKEGGKRKKKKRKEVQKKSTKRNC). The span at 290–309 (GKRKKKKRKEVQKKSTKRNC) shows a compositional bias: basic residues.

Its function is as follows. Probably acts as a co-chaperone. The polypeptide is DnaJ homolog subfamily B member 7 (DNAJB7) (Homo sapiens (Human)).